We begin with the raw amino-acid sequence, 814 residues long: Plakophilin-2 (814 aa).

The tract at residues Met-1–Leu-329 is required for binding to single-stranded DNA. A Phosphoserine modification is found at Ser-44. At Arg-46 the chain carries Omega-N-methylarginine. Phosphoserine is present on residues Ser-82 and Ser-130. ARM repeat units lie at residues Thr-200 to Gly-240, Cys-309 to Gln-352, Ser-354 to Phe-393, Pro-503 to Tyr-549, Pro-604 to Ala-644, Ser-652 to Arg-691, Gln-696 to Gln-737, and Tyr-740 to Ala-782.

It belongs to the beta-catenin family. As to quaternary structure, interacts with DSC2. Interacts with JUP. Interacts with KRT5/CK5, KRT8/CK8, KRT14/CK14, KRT18/CK18 and VIM. Interacts (via N-terminus) with MARK3/C-TAK1. Interacts with DSP. Interacts with DSG1, DSG2 and DSG3. Interacts (via N-terminus) with CTNNB1. Interacts with CDH1. Interacts with the RNA polymerase III (Pol III) complex proteins POLR3A/RPC155, POLR3F/RPC39 and POLR3C/RPC82. Interacts with CTNNA3. Interacts (via N-terminus) with SCN5A/Nav1.5. Interacts with ANK3/ANKG and GJA1/CX43. As to expression, expressed in the heart (at protein level).

It localises to the nucleus. The protein localises to the cell junction. Its subcellular location is the desmosome. It is found in the cytoplasm. In terms of biological role, a component of desmosome cell-cell junctions which are required for positive regulation of cellular adhesion. Regulates focal adhesion turnover resulting in changes in focal adhesion size, cell adhesion and cell spreading, potentially via transcriptional modulation of beta-integrins. Required to maintain gingival epithelial barrier function. Important component of the desmosome that is also required for localization of desmosome component proteins such as DSC2, DSG2 and JUP to the desmosome cell-cell junction. Required for the formation of desmosome cell junctions in cardiomyocytes, thereby required for the correct formation of the heart, specifically trabeculation and formation of the atria walls. Loss of desmosome cell junctions leads to mis-localization of DSP and DSG2 resulting in disruption of cell-cell adhesion and disordered intermediate filaments. Modulates profibrotic gene expression in cardiomyocytes via regulation of DSP expression and subsequent activation of downstream TGFB1 and MAPK14/p38 MAPK signaling. Required for cardiac sodium current propagation and electrical synchrony in cardiac myocytes, via ANK3 stabilization and modulation of SCN5A/Nav1.5 localization to cell-cell junctions. Required for mitochondrial function, nuclear envelope integrity and positive regulation of SIRT3 transcription via maintaining DES localization at its nuclear envelope and cell tip anchoring points, and thereby preserving regulation of the transcriptional program. Maintenance of nuclear envelope integrity protects against DNA damage and transcriptional dysregulation of genes, especially those involved in the electron transport chain, thereby preserving mitochondrial function and protecting against superoxide radical anion generation. Binds single-stranded DNA (ssDNA). May regulate the localization of GJA1 to gap junctions in intercalated disks of the heart. The protein is Plakophilin-2 of Rattus norvegicus (Rat).